The chain runs to 178 residues: Single-stranded DNA-binding protein 2 (178 aa).

One can recognise an SSB domain in the interval 6-111 (VNKVILVGNL…VVVSQSGTMQ (106 aa)). The DNA-binding element occupies 55–61 (WHRVVLY). Positions 111–161 (QMLGGRNSAGSGQQQGGWGQPQQPAAPSHSGMPPQQHPANEPPMDFDDDIP) are disordered.

In terms of assembly, homotetramer.

This chain is Single-stranded DNA-binding protein 2 (ssb2), found in Salmonella typhi.